Here is a 279-residue protein sequence, read N- to C-terminus: 3-methyl-2-oxobutanoate hydroxymethyltransferase (279 aa).

Mg(2+) contacts are provided by Asp-44 and Asp-83. 3-methyl-2-oxobutanoate is bound by residues 44 to 45 (DS), Asp-83, and Lys-112. Glu-114 provides a ligand contact to Mg(2+). Residue Glu-180 is the Proton acceptor of the active site.

The protein belongs to the PanB family. In terms of assembly, homodecamer; pentamer of dimers. The cofactor is Mg(2+).

The protein resides in the cytoplasm. The enzyme catalyses 3-methyl-2-oxobutanoate + (6R)-5,10-methylene-5,6,7,8-tetrahydrofolate + H2O = 2-dehydropantoate + (6S)-5,6,7,8-tetrahydrofolate. It functions in the pathway cofactor biosynthesis; (R)-pantothenate biosynthesis; (R)-pantoate from 3-methyl-2-oxobutanoate: step 1/2. In terms of biological role, catalyzes the reversible reaction in which hydroxymethyl group from 5,10-methylenetetrahydrofolate is transferred onto alpha-ketoisovalerate to form ketopantoate. The polypeptide is 3-methyl-2-oxobutanoate hydroxymethyltransferase (Chloroflexus aggregans (strain MD-66 / DSM 9485)).